The following is a 35-amino-acid chain: Mu-theraphotoxin-Pn3b (35 aa).

Cystine bridges form between cysteine 2/cysteine 16, cysteine 9/cysteine 21, and cysteine 15/cysteine 28.

Belongs to the neurotoxin 10 (Hwtx-1) family. 28 (Jztx-11) subfamily. As to expression, expressed by the venom gland.

The protein localises to the secreted. In terms of biological role, gating-modifier toxin that targets voltage-gated sodium channels with a preferential activity on Nav1.7/SCN9A. On Nav1.7/SCN9A, the toxin acts by shifting the voltage-dependence of activation to more depolarized potentials, whereas it does not cause significant effect on the voltage-dependence of activation on other sodium channels. Minor effects are observed on the voltage-dependence of steady-state fast inactivation for all sodium channels tested (Nav1.1/SCN1A-Nav1.8/SCN10A). By testing the toxin on channel chimera, it has been shown to interact with the S3-S4 linkers in DII and DIV domains of Nav1.7/SCN9A. In vivo, the toxin dose-dependently reduces OD1-induced spontaneous pain behaviors. This chain is Mu-theraphotoxin-Pn3b, found in Pamphobeteus nigricolor (Giant blue bloom tarantula).